The chain runs to 80 residues: RNA-binding protein Hfq (80 aa).

Positions 10–70 (DAFLNQVRKE…ISTISPLRPV (61 aa)) constitute a Sm domain.

The protein belongs to the Hfq family. In terms of assembly, homohexamer.

RNA chaperone that binds small regulatory RNA (sRNAs) and mRNAs to facilitate mRNA translational regulation in response to envelope stress, environmental stress and changes in metabolite concentrations. Also binds with high specificity to tRNAs. The sequence is that of RNA-binding protein Hfq from Desulforamulus reducens (strain ATCC BAA-1160 / DSM 100696 / MI-1) (Desulfotomaculum reducens).